Reading from the N-terminus, the 307-residue chain is tRNA pseudouridine synthase B (307 aa).

The Nucleophile role is filled by Asp38.

It belongs to the pseudouridine synthase TruB family. Type 1 subfamily.

It catalyses the reaction uridine(55) in tRNA = pseudouridine(55) in tRNA. In terms of biological role, responsible for synthesis of pseudouridine from uracil-55 in the psi GC loop of transfer RNAs. The sequence is that of tRNA pseudouridine synthase B from Bacillus cereus (strain ZK / E33L).